A 157-amino-acid polypeptide reads, in one-letter code: UPF0251 protein CLK_0815 (157 aa).

The protein belongs to the UPF0251 family.

This is UPF0251 protein CLK_0815 from Clostridium botulinum (strain Loch Maree / Type A3).